A 245-amino-acid polypeptide reads, in one-letter code: Dehydrogenase/reductase SDR family member 6 (245 aa).

Residues 16–18, Asp37, and Asp58 contribute to the NAD(+) site; that span reads QGI. Residue Arg144 participates in substrate binding. The Proton acceptor role is filled by Tyr147. NAD(+) is bound by residues Lys151 and 180–184; that span reads VDTPS. The substrate site is built by Arg188 and Arg205.

This sequence belongs to the short-chain dehydrogenases/reductases (SDR) family. As to quaternary structure, homotetramer.

It localises to the cytoplasm. The catalysed reaction is cis-4-hydroxy-L-proline + NAD(+) = 4-oxo-L-proline + NADH + H(+). The enzyme catalyses (R)-3-hydroxybutanoate + NAD(+) = acetoacetate + NADH + H(+). It functions in the pathway amino-acid metabolism. Its pathway is siderophore biosynthesis. In terms of biological role, NAD(H)-dependent dehydrogenase/reductase with a preference for cyclic substrates. Catalyzes stereoselective conversion of 4-oxo-L-proline to cis-4-hydroxy-L-proline, likely a detoxification mechanism for ketoprolines. Mediates the formation of 2,5-dihydroxybenzoate (2,5-DHBA), a siderophore that chelates free cytoplasmic iron and associates with LCN2, thereby regulating iron transport and homeostasis while protecting cells against free radical-induced oxidative stress. The iron-siderophore complex is imported into mitochondria, providing an iron source for mitochondrial metabolic processes in particular heme synthesis. May act as a 3-hydroxybutyrate dehydrogenase. This chain is Dehydrogenase/reductase SDR family member 6, found in Rattus norvegicus (Rat).